Here is a 151-residue protein sequence, read N- to C-terminus: Neuroglobin (151 aa).

A Globin domain is found at 1-149; the sequence is MERPEPELIR…VVQAMSRGWD (149 aa). Residues Cys-46 and Cys-55 are joined by a disulfide bond. Heme b contacts are provided by His-64 and His-96.

Belongs to the globin family. Monomer. Homodimer and homotetramer; disulfide-linked. Mainly monomeric but also detected as part of homodimers and homotetramers. Interacts with 14-3-3 proteins; regulates the phosphorylation of NGB. Could interact (ferrous form) with G-alpha(i) proteins (GTP-bound form). In terms of processing, phosphorylated during hypoxia by ERK1/ERK2. Phosphorylation regulates the heme pocket hexacoordination preventing the association of His-64 with the heme metal center. Thereby, promotes the access of dioxygen and nitrite to the heme and stimulates the nitrite reductase activity. Phosphorylation during hypoxia is stabilized by 14-3-3 proteins. Post-translationally, an intramolecular Cys-46/Cys-55 disulfide bond, not necessarily present in orthologs, regulates the heme pocket hexacoordination preventing the association of His-64 with the heme metal center. Thereby, promotes the access of dioxygen and nitrite to the heme and stimulates the nitrite reductase activity. As to expression, predominantly expressed in brain, the strongest expression is seen in the frontal lobe, the subthalamic nucleus and the thalamus.

The protein localises to the cytoplasm. The protein resides in the cytosol. It localises to the mitochondrion matrix. The catalysed reaction is Fe(III)-heme b-[protein] + nitric oxide + H2O = Fe(II)-heme b-[protein] + nitrite + 2 H(+). Functionally, monomeric globin with a bis-histidyl six-coordinate heme-iron atom through which it can bind dioxygen, carbon monoxide and nitric oxide. Could help transport oxygen and increase its availability to the metabolically active neuronal tissues, though its low quantity in tissues as well as its high affinity for dioxygen, which may limit its oxygen-releasing ability, argue against it. The ferrous/deoxygenated form exhibits a nitrite reductase activity and it could produce nitric oxide which in turn inhibits cellular respiration in response to hypoxia. In its ferrous/deoxygenated state, it may also exhibit GDI (Guanine nucleotide Dissociation Inhibitor) activity toward heterotrimeric G-alpha proteins, thereby regulating signal transduction to facilitate neuroprotective responses in the wake of hypoxia and associated oxidative stress. The polypeptide is Neuroglobin (Homo sapiens (Human)).